Here is a 191-residue protein sequence, read N- to C-terminus: ECF RNA polymerase sigma-E factor (191 aa).

The tract at residues 1–153 (MSEQLTDQVL…MAITLRELDG (153 aa)) is binds RNAP core. Residues 25–92 (LVVRYQHKVA…KNYLVAQGRR (68 aa)) are sigma-70 factor domain-2. A Polymerase core binding motif is present at residues 48-61 (DVVQEAFIKAYRAL). The interval 129–180 (QIVFRTIESLPEDLRMAITLRELDGLSYEEIAAIMDCPVGTVRSRIFRAREA) is sigma-70 factor domain-4. The segment at residues 156–175 (YEEIAAIMDCPVGTVRSRIF) is a DNA-binding region (H-T-H motif).

It belongs to the sigma-70 factor family. ECF subfamily. As to quaternary structure, interacts transiently with the RNAP catalytic core formed by RpoA, RpoB, RpoC and RpoZ (2 alpha, 1 beta, 1 beta' and 1 omega subunit) to form the RNAP holoenzyme that can initiate transcription. Interacts 1:1 with anti-sigma-E factor RseA which prevents binding to RNAP catalytic core.

It is found in the cytoplasm. ECF sigma-E is held in an inactive form by its cognate anti-sigma factor (RseA) until released by regulated intramembrane proteolysis (RIP). RIP occurs when an extracytoplasmic signal (periplasmic stress and excess LPS) triggers a concerted proteolytic cascade to transmit information and elicit cellular responses. The anti-sigma factor RseA is an inner membrane protein, binding sigma-E in the cytoplasm and RseB in the periplasm. RseA is first cut extracytoplasmically (site-1 protease, S1P, by DegS), then within the membrane itself (site-2 protease, S2P, by RseP), while cytoplasmic proteases (predominantly ClpX-ClpP) finish degrading the regulatory protein, liberating sigma-E. Degradation of RseA requires 2 signals to activate DegS; an outer membrane protein (OMP) signal activates DegS, while an LPS signal causes release of RseB from RseA, freeing RseA to be cleaved. In terms of biological role, sigma factors are initiation factors that promote the attachment of RNA polymerase (RNAP) to specific initiation sites and are then released. Extracytoplasmic function (ECF) sigma-E controls the envelope stress response, responding to periplasmic protein stress, increased levels of periplasmic lipopolysaccharide (LPS) as well as heat shock and oxidative stress; it controls protein processing in the extracytoplasmic compartment. This Escherichia coli O157:H7 protein is ECF RNA polymerase sigma-E factor (rpoE).